The primary structure comprises 341 residues: MYTLARQLLFKLSPETSHDLSLDLIGAGGRLGLNGLVCKAPAKVPVSVMGLDFPNPVGLAAGLDKNGAAIDGFAQLGFGFVEIGTVTPRPQPGNPKPRIFRLPEAEAIINRMGFNNLGVDHLLSRVQAAKYQGILGINIGKNFDTPVERAVDDYLICLDKVYAHASYVTVNVSSPNTPGLRSLQFGDSLKQLLEALRQRQEDLAVRHGKRVPLAIKIAPDMSDEETVLVAQALVDSGMDAVIATNTTLSRVGVEGLAHGDEAGGLSGAPVRDKSTHIVKVLAAELAGRLPIIAVGGITEGKHAAEKIAAGASLVQLYSGFIYKGPALIRQSVDAIAALPKA.

FMN contacts are provided by residues 61–65 (AGLDK) and T85. Residue K65 participates in substrate binding. Substrate is bound at residue 110–114 (NRMGF). Residues N138 and N171 each coordinate FMN. A substrate-binding site is contributed by N171. S174 acts as the Nucleophile in catalysis. N176 is a substrate binding site. Positions 216 and 244 each coordinate FMN. 245 to 246 (NT) serves as a coordination point for substrate. FMN is bound by residues G267, G296, and 317-318 (YS).

This sequence belongs to the dihydroorotate dehydrogenase family. Type 2 subfamily. As to quaternary structure, monomer. Requires FMN as cofactor.

The protein resides in the cell membrane. The catalysed reaction is (S)-dihydroorotate + a quinone = orotate + a quinol. It functions in the pathway pyrimidine metabolism; UMP biosynthesis via de novo pathway; orotate from (S)-dihydroorotate (quinone route): step 1/1. Its function is as follows. Catalyzes the conversion of dihydroorotate to orotate with quinone as electron acceptor. The polypeptide is Dihydroorotate dehydrogenase (quinone) (Pseudomonas fluorescens (strain SBW25)).